Reading from the N-terminus, the 143-residue chain is Transcriptional regulator MraZ (143 aa).

2 SpoVT-AbrB domains span residues 5–47 (EFQH…TLTE) and 76–119 (AVEV…DRKL).

Belongs to the MraZ family. As to quaternary structure, forms oligomers.

It is found in the cytoplasm. It localises to the nucleoid. The chain is Transcriptional regulator MraZ from Macrococcus caseolyticus (strain JCSC5402) (Macrococcoides caseolyticum).